The following is an 816-amino-acid chain: H(+)/Cl(-) exchange transporter 5 (816 aa).

At 1-124 (MAMWQGAMDN…WALIHSVSDA (124 aa)) the chain is on the cytoplasmic side. 2 consecutive transmembrane segments (helical) span residues 125–162 (FSGW…ICTG) and 208–231 (VNYF…VKAF). Residues 237–241 (GSGIP) carry the Selectivity filter part_1 motif. Serine 238 is a chloride binding site. Positions 240 to 247 (IPEIKTIL) form an intramembrane region, helical. Helical transmembrane passes span 256–275 (LGKW…VSSG) and 281–300 (EGPL…HCFN). The short motif at 279–283 (GKEGP) is the Selectivity filter part_2 element. Intramembrane regions (helical) lie at residues 312–324 (VLSA…VSVA) and 328–336 (PIGGVLFSL). 5 helical membrane-spanning segments follow: residues 348–366 (LWRS…RSIN), 389–414 (LVPF…IAWC), 422–442 (LGKY…ILAF), 498–518 (MWQL…TFGM), and 523–542 (GLFI…LGVG). The Selectivity filter part_3 motif lies at 523–527 (GLFIP). Phenylalanine 525 serves as a coordination point for chloride. The helical intramembrane region spans 570-584 (GLYAMVGAAACLGGV). An intramembrane region (note=Loop between two helices) is located at residues 585 to 587 (TRM). An intramembrane region (helical) is located at residues 588-599 (TVSLVVIMFELT). Positions 600–604 (GGLEY) form an intramembrane region, note=Loop between two helices. A helical transmembrane segment spans residues 605-622 (IVPLMAAAMTSKWVADAL). The Cytoplasmic segment spans residues 623 to 816 (GREGIYDAHI…NQDPESILFN (194 aa)). A chloride-binding site is contributed by tyrosine 628. 2 CBS domains span residues 656–720 (MKPR…ARKK) and 752–811 (ILDL…QDPE). ATP-binding positions include threonine 666, 687–689 (YSG), and 794–797 (TKKD).

This sequence belongs to the chloride channel (TC 2.A.49) family. ClC-5/CLCN5 subfamily. Interacts with NEDD4 and NEDD4L. In terms of processing, ubiquitinated by NEDD4L in the presence of albumin; which promotes endocytosis and proteasomal degradation. As to expression, kidney specific.

It is found in the golgi apparatus membrane. Its subcellular location is the endosome membrane. The protein localises to the cell membrane. It catalyses the reaction 2 chloride(in) + H(+)(out) = 2 chloride(out) + H(+)(in). Proton-coupled chloride transporter. Functions as antiport system and exchanges chloride ions against protons. Important for normal acidification of the endosome lumen. May play an important role in renal tubular function. The CLC channel family contains both chloride channels and proton-coupled anion transporters that exchange chloride or another anion for protons. The absence of conserved gating glutamate residues is typical for family members that function as channels. The sequence is that of H(+)/Cl(-) exchange transporter 5 (Clcn5) from Rattus norvegicus (Rat).